Here is a 209-residue protein sequence, read N- to C-terminus: Large ribosomal subunit protein uL4 (209 aa).

Residues 47 to 72 are disordered; the sequence is TSSTKTRSEVRGSSKKPWKQKGTGRA. The segment covering 59–72 has biased composition (basic residues); the sequence is SSKKPWKQKGTGRA.

The protein belongs to the universal ribosomal protein uL4 family. As to quaternary structure, part of the 50S ribosomal subunit.

One of the primary rRNA binding proteins, this protein initially binds near the 5'-end of the 23S rRNA. It is important during the early stages of 50S assembly. It makes multiple contacts with different domains of the 23S rRNA in the assembled 50S subunit and ribosome. In terms of biological role, forms part of the polypeptide exit tunnel. This is Large ribosomal subunit protein uL4 from Borreliella burgdorferi (strain ZS7) (Borrelia burgdorferi).